We begin with the raw amino-acid sequence, 290 residues long: Pyridoxal kinase PdxY (290 aa).

Residues serine 12 and 47–48 (TQ) contribute to the substrate site. Residues aspartate 114, glutamate 151, lysine 184, and 211-214 (RPLL) contribute to the ATP site. A substrate-binding site is contributed by aspartate 225.

It belongs to the pyridoxine kinase family. PdxY subfamily. In terms of assembly, homodimer. Mg(2+) serves as cofactor.

The enzyme catalyses pyridoxal + ATP = pyridoxal 5'-phosphate + ADP + H(+). It functions in the pathway cofactor metabolism; pyridoxal 5'-phosphate salvage; pyridoxal 5'-phosphate from pyridoxal: step 1/1. In terms of biological role, pyridoxal kinase involved in the salvage pathway of pyridoxal 5'-phosphate (PLP). Catalyzes the phosphorylation of pyridoxal to PLP. In Pseudomonas entomophila (strain L48), this protein is Pyridoxal kinase PdxY.